We begin with the raw amino-acid sequence, 180 residues long: Non-specific lipid transfer protein GPI-anchored 3 (180 aa).

A signal peptide spans 1–22 (MEAVRFAVAVVLVFCYVTSSNA). 4 disulfides stabilise this stretch: Cys41–Cys78, Cys48–Cys62, Cys63–Cys104, and Cys76–Cys113. N-linked (GlcNAc...) asparagine glycans are attached at residues Asn91 and Asn120. 2 stretches are compositionally biased toward low complexity: residues 116-125 (SAGTNSSSTP) and 133-156 (PASS…TAKP). A disordered region spans residues 116–156 (SAGTNSSSTPPATPKTPPASSTSTGTGSGSTGNAAPSTAKP). Ser158 is lipidated: GPI-anchor amidated serine. The propeptide at 159–180 (SAPAINFGGLSFASAVVATLFF) is removed in mature form.

Belongs to the plant LTP family. In terms of tissue distribution, restricted to stamen, pollen and sporophytic tissues. Also detected, at low levels, in stems and leaves.

The protein resides in the cell membrane. Its function is as follows. Lipid transfer protein involved in seed and ovule maturation and development, probably by regulating the fatty acids homeostasis during suberin and sporopollenin biosynthesis or deposition. The polypeptide is Non-specific lipid transfer protein GPI-anchored 3 (Arabidopsis thaliana (Mouse-ear cress)).